Consider the following 475-residue polypeptide: UDP-N-acetylmuramate--L-alanine ligase (475 aa).

125 to 131 is a binding site for ATP; it reads GTHGKTT.

Belongs to the MurCDEF family.

It localises to the cytoplasm. The enzyme catalyses UDP-N-acetyl-alpha-D-muramate + L-alanine + ATP = UDP-N-acetyl-alpha-D-muramoyl-L-alanine + ADP + phosphate + H(+). It functions in the pathway cell wall biogenesis; peptidoglycan biosynthesis. Functionally, cell wall formation. This is UDP-N-acetylmuramate--L-alanine ligase from Actinobacillus pleuropneumoniae serotype 7 (strain AP76).